A 391-amino-acid chain; its full sequence is Succinate--CoA ligase [GDP-forming] subunit beta, mitochondrial (391 aa).

The ATP-grasp domain maps to 5 to 233 (KKIMADHGVT…NAEFRQKEIF (229 aa)). GTP contacts are provided by residues Gln-16, 49–51 (GRG), and Leu-105. Asn-202 and Asp-216 together coordinate Mg(2+). Substrate-binding positions include Asn-267 and 324–326 (GIV).

Belongs to the succinate/malate CoA ligase beta subunit family. GTP-specific subunit beta subfamily. Heterodimer of an alpha and a beta subunit. The beta subunit determines specificity for GTP. The cofactor is Mg(2+). In terms of tissue distribution, widely expressed. Not present in breast muscle.

The protein localises to the mitochondrion. It catalyses the reaction GTP + succinate + CoA = succinyl-CoA + GDP + phosphate. It participates in carbohydrate metabolism; tricarboxylic acid cycle; succinate from succinyl-CoA (ligase route): step 1/1. GTP-specific succinyl-CoA synthetase functions in the citric acid cycle (TCA), coupling the hydrolysis of succinyl-CoA to the synthesis of GTP and thus represents the only step of substrate-level phosphorylation in the TCA. The beta subunit provides nucleotide specificity of the enzyme and binds the substrate succinate, while the binding sites for coenzyme A and phosphate are found in the alpha subunit. The protein is Succinate--CoA ligase [GDP-forming] subunit beta, mitochondrial of Columba livia (Rock dove).